Here is an 81-residue protein sequence, read N- to C-terminus: MSHSVKIYDTCIGCTQCVRACPTDVLEMIPWDGCKAKQIAPAPRTEDCVGCKRCESACPTDFLSVRVYLWHETTRSMGLAY.

4Fe-4S ferredoxin-type domains lie at 2–31 and 39–68; these read SHSVKIYDTCIGCTQCVRACPTDVLEMIPW and IAPAPRTEDCVGCKRCESACPTDFLSVRVY. C11, C14, C17, C21, C48, C51, C54, and C58 together coordinate [4Fe-4S] cluster.

As to quaternary structure, the eukaryotic PSI reaction center is composed of at least 11 subunits. It depends on [4Fe-4S] cluster as a cofactor.

It localises to the plastid. Its subcellular location is the chloroplast thylakoid membrane. The enzyme catalyses reduced [plastocyanin] + hnu + oxidized [2Fe-2S]-[ferredoxin] = oxidized [plastocyanin] + reduced [2Fe-2S]-[ferredoxin]. In terms of biological role, apoprotein for the two 4Fe-4S centers FA and FB of photosystem I (PSI); essential for photochemical activity. FB is the terminal electron acceptor of PSI, donating electrons to ferredoxin. The C-terminus interacts with PsaA/B/D and helps assemble the protein into the PSI complex. Required for binding of PsaD and PsaE to PSI. PSI is a plastocyanin-ferredoxin oxidoreductase, converting photonic excitation into a charge separation, which transfers an electron from the donor P700 chlorophyll pair to the spectroscopically characterized acceptors A0, A1, FX, FA and FB in turn. The polypeptide is Photosystem I iron-sulfur center (Liriodendron tulipifera (Tuliptree)).